We begin with the raw amino-acid sequence, 208 residues long: N-(5'-phosphoribosyl)anthranilate isomerase (208 aa).

This sequence belongs to the TrpF family.

It carries out the reaction N-(5-phospho-beta-D-ribosyl)anthranilate = 1-(2-carboxyphenylamino)-1-deoxy-D-ribulose 5-phosphate. The protein operates within amino-acid biosynthesis; L-tryptophan biosynthesis; L-tryptophan from chorismate: step 3/5. The sequence is that of N-(5'-phosphoribosyl)anthranilate isomerase from Neisseria gonorrhoeae (strain ATCC 700825 / FA 1090).